Consider the following 283-residue polypeptide: MSNQHSSTAAPSSYILDSANQPTSFDGNEQGDVNPKPLDHIRPVCNLETQMSNLPTDSVYASQPDGGLVAWLQVLGAWVLFFNTWGAMNSFGVFQTYYESGVLFDRSSSDIAWIGSIQTFCLQAMGLVAGPLYDRGGFKILIVTGSVGVVSGYMMLSLCEEFWQVLLAQGFLIGIAEGCLFTPMISILPTYFSTKIGLATGIASSGSSMGGVVYPIVMKSLMYNIGFAWTTRVLGFISLGMLLIPIIVMRERVKPALRVHRDLIDLSVFTDWPFIVFVIATMI.

A run of 7 helical transmembrane segments spans residues 68 to 88 (LVAW…WGAM), 111 to 131 (IAWI…VAGP), 136 to 156 (GGFK…YMML), 165 to 185 (VLLA…TPMI), 196 to 216 (IGLA…VYPI), 227 to 247 (FAWT…IPII), and 263 to 283 (LIDL…ATMI).

The protein belongs to the major facilitator superfamily. Monocarboxylate porter (TC 2.A.1.13) family.

The protein resides in the membrane. In terms of biological role, MFS-type transporter; part of the gene cluster that mediates the biosynthesis of eupenifeldin, a bistropolone meroterpenoid that acts as an antitumor agent. The chain is MFS-type transporter eupM from Phoma sp.